Here is a 75-residue protein sequence, read N- to C-terminus: Dermaseptin-A3 (75 aa).

A signal peptide spans 1–22; that stretch reads MAFLKKSLFLVLLLGLISLSIC. Positions 23–43 are excised as a propeptide; the sequence is EEEKRENEVEEEQEDDEQSEL. At Gln-72 the chain carries Glutamine amide. A propeptide spanning residues 74–75 is cleaved from the precursor; sequence EQ.

This sequence belongs to the frog skin active peptide (FSAP) family. Dermaseptin subfamily. As to expression, expressed by the skin glands.

Its subcellular location is the secreted. In terms of biological role, possesses a potent antimicrobial activity against Gram-positive and Gram-negative bacteria. Probably acts by disturbing membrane functions with its amphipathic structure. This chain is Dermaseptin-A3, found in Agalychnis annae (Blue-sided leaf frog).